Here is a 75-residue protein sequence, read N- to C-terminus: Serine rich endogenous peptide 20 (75 aa).

An N-terminal signal peptide occupies residues 1–25; it reads MYKLTLCILTLSFLLLSGLSNTVLA. The SCOOP motif signature appears at 52–66; it reads KIGASGSNSGRAPSC. The interval 54-75 is disordered; the sequence is GASGSNSGRAPSCNNSCKPNRP. The SxS motif essential for MIK2 binding motif lies at 56 to 58; it reads SGS. A compositionally biased stretch (polar residues) spans 56–75; sequence SGSNSGRAPSCNNSCKPNRP.

The protein belongs to the serine rich endogenous peptide (SCOOP) phytocytokine family. Interacts with MIK2 (via extracellular leucine-rich repeat domain); this interaction triggers the formation of complex between MIK2 and the BAK1/SERK3 and SERK4 coreceptors, and subsequent BAK1 activation by phosphorylation. Mostly expressed in roots.

It localises to the cell membrane. It is found in the secreted. Its subcellular location is the extracellular space. The protein localises to the apoplast. Functionally, brassicaceae-specific phytocytokine (plant endogenous peptide released into the apoplast) perceived by MIK2 in a BAK1/SERK3 and SERK4 coreceptors-dependent manner, that modulates various physiological and antimicrobial processes including growth prevention and reactive oxygen species (ROS) response regulation. Inhibits root growth. The sequence is that of Serine rich endogenous peptide 20 from Arabidopsis thaliana (Mouse-ear cress).